The sequence spans 194 residues: Peptidyl-tRNA hydrolase (194 aa).

Y16 contributes to the tRNA binding site. Catalysis depends on H21, which acts as the Proton acceptor. Residues F67, N69, and N115 each coordinate tRNA.

Belongs to the PTH family. As to quaternary structure, monomer.

The protein localises to the cytoplasm. It carries out the reaction an N-acyl-L-alpha-aminoacyl-tRNA + H2O = an N-acyl-L-amino acid + a tRNA + H(+). Its function is as follows. Hydrolyzes ribosome-free peptidyl-tRNAs (with 1 or more amino acids incorporated), which drop off the ribosome during protein synthesis, or as a result of ribosome stalling. In terms of biological role, catalyzes the release of premature peptidyl moieties from peptidyl-tRNA molecules trapped in stalled 50S ribosomal subunits, and thus maintains levels of free tRNAs and 50S ribosomes. This is Peptidyl-tRNA hydrolase from Klebsiella pneumoniae (strain 342).